We begin with the raw amino-acid sequence, 378 residues long: MRLRTALLATTLMAAAPVAANATIITGPYVDLGGGYNLVQNQHGHFSNDPANASMLTKSSSQYRHDAGFTGFGAVGWGFGNGLRLEAEGLYNYSEINHRAPTAATGVTSGHDQSYGGMLNVLYDIDLKQFGIDVPVTPFVGVGAGYLWQNVSPTTTRYSNGNVSRLGGTNGGFAYQGIVGAAYDIPNMPGLQLTAQYRMVGQAFSDGPFTMTSYTNGVGKSVGHAFFDNRFNHQFILGLRYAFNTAPPPPPPAPVVVPPAPTPARTYLVFFDWDRSDLTARAREIVAEAAQASTHVQTTRIEVNGYTDNSAAHPGPRGEKYNMGLSIRRAQSVKAELIRDGVPTGAIDIHGYGEQHPLVPTGPNTREPQNRRVEIILH.

Positions 1-22 (MRLRTALLATTLMAAAPVAANA) are cleaved as a signal peptide. In terms of domain architecture, OmpA-like spans 258–378 (PPAPTPARTY…QNRRVEIILH (121 aa)).

It is found in the cell outer membrane. In terms of biological role, growth enhancer. In Gluconacetobacter diazotrophicus (strain ATCC 49037 / DSM 5601 / CCUG 37298 / CIP 103539 / LMG 7603 / PAl5), this protein is Outer membrane protein.